The following is an 843-amino-acid chain: Complement component C7 (843 aa).

An N-terminal signal peptide occupies residues 1–22; it reads MKVISLFILVGFIGEFQSFSSA. The TSP type-1 1 domain maps to 27–80; the sequence is NCQWDFYAPWSECNGCTKTQTRRRSVAVYGQYGGQPCVGNAFETQSCEPTRGCP. 7 disulfides stabilise this stretch: Cys-28/Cys-63, Cys-39/Cys-73, Cys-42/Cys-79, Cys-85/Cys-96, Cys-91/Cys-109, Cys-103/Cys-119, and Cys-128/Cys-165. Trp-36 is a glycosylation site (C-linked (Man) tryptophan). Positions 83–121 constitute an LDL-receptor class A domain; the sequence is EGCGERFRCFSGQCISKSLVCNGDSDCDEDSADEDRCED. Residues 108-120 show a composition bias toward acidic residues; sequence DCDEDSADEDRCE. A disordered region spans residues 108–143; sequence DCDEDSADEDRCEDSERRPSCDIDKPPPNIELTGNG. Basic and acidic residues predominate over residues 121-132; sequence DSERRPSCDIDK. The 333-residue stretch at 124–456 folds into the MACPF domain; the sequence is RRPSCDIDKP…EYLDEFDPCH (333 aa). N-linked (GlcNAc...) asparagine glycosylation occurs at Asn-202. A disordered region spans residues 219–240; that stretch reads SRKRSFFRSSSSSSRSYTSHTN. A compositionally biased stretch (low complexity) spans 225–234; the sequence is FRSSSSSSRS. Disulfide bonds link Cys-337–Cys-353, Cys-433–Cys-560, Cys-455–Cys-505, Cys-457–Cys-473, Cys-460–Cys-475, Cys-477–Cys-486, Cys-512–Cys-545, Cys-523–Cys-535, Cys-571–Cys-613, Cys-599–Cys-626, Cys-631–Cys-673, and Cys-659–Cys-688. The region spanning 457-487 is the EGF-like domain; it reads CRPCQNGGLATVEGTHCLCHCKPYTFGAACE. In terms of domain architecture, TSP type-1 2 spans 500–549; sequence DGGWSCWSSWSPCVQGKKTRSRECNNPPPSGGGRSCVGETTESTQCEDEE. Residues Trp-503, Trp-506, and Trp-509 are each glycosylated (C-linked (Man) tryptophan; partial). Residues 516–538 are disordered; it reads KKTRSRECNNPPPSGGGRSCVGE. CCP stretches follow at residues 545–615 and 616–693; these read CEDE…RCGE and DLRW…QKEN. Sushi domains lie at 569–628 and 629–690; these read EFCP…HCQK and IACV…RCVQ. 2 factor I module (FIM) regions span residues 695 to 770 and 771 to 843; these read LTQA…ASAE and KACG…AETQ. O-linked (GalNAc...) threonine glycosylation occurs at Thr-696. Cystine bridges form between Cys-702–Cys-713, Cys-715–Cys-750, Cys-721–Cys-743, Cys-728–Cys-763, Cys-773–Cys-782, Cys-776–Cys-789, Cys-791–Cys-825, Cys-797–Cys-818, and Cys-805–Cys-838. Residue Asn-754 is glycosylated (N-linked (GlcNAc...) (complex) asparagine).

It belongs to the complement C6/C7/C8/C9 family. In terms of assembly, monomer or dimer; as a C5b-7 complex it can also form multimeric rosettes. Component of the membrane attack complex (MAC), composed of complement C5b, C6, C7, C8A, C8B, C8G and multiple copies of the pore-forming subunit C9. In terms of processing, C-, N- and O-glycosylated. O-glycosylated with core 1 or possibly core 8 glycans.

The protein localises to the secreted. The protein resides in the target cell membrane. Its activity is regulated as follows. Membrane attack complex (MAC) assembly is inhibited by CD59, thereby protecting self-cells from damage during complement activation. MAC assembly is also inhibited by clusterin (CLU) chaperones that inhibit polymerization of C9. Its function is as follows. Component of the membrane attack complex (MAC), a multiprotein complex activated by the complement cascade, which inserts into a target cell membrane and forms a pore, leading to target cell membrane rupture and cell lysis. The MAC is initiated by proteolytic cleavage of C5 into complement C5b in response to the classical, alternative, lectin and GZMK complement pathways. The complement pathways consist in a cascade of proteins that leads to phagocytosis and breakdown of pathogens and signaling that strengthens the adaptive immune system. C7 serves as a membrane anchor. During MAC assembly, associates with C5b and C6 to form the C5b-7 complex, a key lipophilic precursor of the MAC complex, which associates with the outer leaflet and reduces the energy for membrane bending. This Homo sapiens (Human) protein is Complement component C7.